The sequence spans 653 residues: Multidomain regulatory protein MT1410 (653 aa).

A PAC domain is found at 86 to 142 (SGSEWRLQTDYDGSGVEERYFDFVVTPRRRADGSIEGVQLIVDDVTSRVRARQAAEA). The region spanning 177-396 (DIAAEYLVAA…DDVTLLAMQR (220 aa)) is the PPM-type phosphatase domain. 4 residues coordinate Mn(2+): Asp-211, Val-212, Asp-328, and Asp-387. The segment at 397 to 544 (RAPTPPLHIT…TMVRRAAFQQ (148 aa)) is anti-sigma factor kinase region. Residues 546 to 653 (IDSEFVSLVE…ADTEDIFAQE (108 aa)) enclose the STAS domain. Residue Ser-600 is modified to Phosphoserine.

The cofactor is Mg(2+). Mn(2+) serves as cofactor. Post-translationally, autophosphorylated.

It catalyses the reaction O-phospho-L-seryl-[protein] + H2O = L-seryl-[protein] + phosphate. The enzyme catalyses O-phospho-L-threonyl-[protein] + H2O = L-threonyl-[protein] + phosphate. It carries out the reaction L-seryl-[protein] + ATP = O-phospho-L-seryl-[protein] + ADP + H(+). The catalysed reaction is L-threonyl-[protein] + ATP = O-phospho-L-threonyl-[protein] + ADP + H(+). In terms of biological role, primarily acts as an independent SigF regulator that is sensitive to the osmosensory signal, mediating the cross talk of PknD with the SigF regulon. Possesses both phosphatase and kinase activities. The kinase domain functions as a classic anti-sigma factor-like kinase to phosphorylate the anti-anti-sigma factor domain at the canonical regulatory site, and the phosphatase domain antagonizes this activity. This is Multidomain regulatory protein MT1410 from Mycobacterium tuberculosis (strain CDC 1551 / Oshkosh).